The primary structure comprises 2883 residues: Desmoplakin (2883 aa).

A disordered region spans residues 1–21 (MSCNGGSHPRINTLGRMTRAE). Residues 1 to 596 (MSCNGGSHPR…DYMKTIEDLE (596 aa)) are interaction with PKP1, JUP, PKP2. A globular 1 region spans residues 1 to 1068 (MSCNGGSHPR…ANSENCNKNK (1068 aa)). At Ser22 the chain carries Phosphoserine. Phosphothreonine is present on Thr59. Ser65 carries the phosphoserine modification. At Tyr68 the chain carries Phosphotyrosine. Thr73 is subject to Phosphothreonine. 3 positions are modified to phosphoserine: Ser177, Ser178, and Ser188. Spectrin repeat units follow at residues 190–283 (SGWD…HLRQ) and 284–387 (LQNI…LKEN). Residues 388–458 (AAYFQFFEEA…NLVNKSKKIV (71 aa)) form a Spectrin 3a repeat. The 58-residue stretch at 470–527 (NKPIILRALCDYKQDQKIVHKGDECILKDNNERSKWYVTGPGGVDMLVPSVGLIIPPP) folds into the SH3 domain. The Spectrin 3b repeat unit spans residues 528–557 (NPLAVDLSCKIEQYYEAILALWNQLYINMK). Spectrin repeat units lie at residues 558–639 (SLVS…IQLP), 666–781 (VIET…SLCS), and 782–895 (VRAL…DLEK). A coiled-coil region spans residues 1034 to 1956 (KSLEDLKLKN…LQKEIEKLRQ (923 aa)). The segment at 1069 to 1957 (FLDQNLQKYQ…QKEIEKLRQR (889 aa)) is central fibrous rod domain. 3 positions are modified to phosphoserine: Ser1670, Ser1720, and Ser2036. The globular 2 stretch occupies residues 1958 to 2882 (PYGSHRETQT…YSFSSSSIGG (925 aa)). The 4.5 X 38 AA tandem repeats (Domain A) stretch occupies residues 1972–2220 (TVDSSKLVFD…LLLSVQKRSM (249 aa)). 17 Plectin repeats span residues 2021–2057 (QPFL…PEST), 2058–2095 (VMLL…FDDR), 2096–2133 (QQIY…RETG), 2134–2171 (MRLL…RDLY), 2175–2209 (NDPR…PHTG), 2210–2245 (LLLL…PSTV), 2263–2300 (KDFL…PGTA), 2301–2338 (LELL…IEFK), 2339–2376 (EKLL…KGHG), 2377–2414 (IRLL…EELS), 2418–2452 (SDPS…EETG), 2468–2505 (SQKN…YDTF), 2519–2556 (TITG…RKFF), 2622–2659 (SDPL…SITG), 2660–2697 (QRLL…QDMA), 2736–2773 (QRFL…GRAA), and 2774–2811 (QRLQ…DITG). Phosphoserine occurs at positions 2219, 2221, and 2237. Residues 2256 to 2458 (DEVGERIKDF…EETGLCLLPL (203 aa)) are 4.5 X 38 AA tandem repeats (Domain B). Residue Gln2492 is the site of Omega-hydroxyceramide glutamate ester attachment. Positions 2621 to 2833 (LSDPLEESSP…GLPSPYNMSA (213 aa)) are 4.5 X 38 AA tandem repeats (Domain C). 2 positions are modified to phosphoserine: Ser2822 and Ser2827. Positions 2822 to 2883 (SKGLPSPYNM…SFSSSSIGGY (62 aa)) are disordered. At Tyr2829 the chain carries Phosphotyrosine. A phosphoserine mark is found at Ser2832 and Ser2836. The tract at residues 2835 to 2858 (GSRSGSRSGSRSGSRSGSRSGSRR) is 6 X 4 AA tandem repeats of G-S-R-[SR]. Residues 2835-2858 (GSRSGSRSGSRSGSRSGSRSGSRR) are compositionally biased toward low complexity. An omega-N-methylarginine mark is found at Arg2837 and Arg2858. Residue Ser2860 is modified to Phosphoserine. The residue at position 2864 (Thr2864) is a Phosphothreonine. Over residues 2867–2883 (SSYSYSYSFSSSSIGGY) the composition is skewed to low complexity. Ser2879 is subject to Phosphoserine.

Belongs to the plakin or cytolinker family. In terms of assembly, homodimer. Interacts with COL17A1 (via cytoplasmic region). Interacts with DSC2. Interacts with PKP1. Interacts with PKP2. Interacts weakly with TMEM65. In terms of processing, phosphorylation at Ser-2860 increases association with intermediate filament cytokeratin, potentially facilitating interaction between desmosome junctions and intermediate filament architecture. As to expression, expressed in undifferentiated keratinocytes of the epidermis at birth, expression increases as differentiation proceeds (at protein level). Abundantly expressed in the suprabasal layers and weakly in the basal layers of the outer hair root sheath (at protein level). Expressed at intercalated disks in cardiomyocytes (at protein level).

It localises to the cell junction. The protein localises to the desmosome. It is found in the cell membrane. The protein resides in the cytoplasm. Its function is as follows. Major high molecular weight protein of desmosomes. Regulates profibrotic gene expression in cardiomyocytes via activation of the MAPK14/p38 MAPK signaling cascade and increase in TGFB1 protein abundance. In Mus musculus (Mouse), this protein is Desmoplakin.